Reading from the N-terminus, the 750-residue chain is Glutamate carboxypeptidase 2 (750 aa).

Residues 1-19 (MWNLLHETDSAVATARRPR) lie on the Cytoplasmic side of the membrane. Ser-10 carries the phosphoserine modification. Residues 20 to 43 (WLCAGALVLAGGFFLLGFLFGWFI) traverse the membrane as a helical; Signal-anchor for type II membrane protein segment. The Extracellular portion of the chain corresponds to 44-750 (KSSNEATNIT…AAAETLSEVA (707 aa)). Asn-51, Asn-76, Asn-121, Asn-140, Asn-153, and Asn-195 each carry an N-linked (GlcNAc...) asparagine glycan. Substrate-binding residues include Arg-210 and Asn-257. 2 residues coordinate Ca(2+): Thr-269 and Tyr-272. The tract at residues 274 to 587 (ANEYAYRRGI…QVRGGMVFEL (314 aa)) is NAALADase. N-linked (GlcNAc...) asparagine glycosylation occurs at Asn-336. Zn(2+) contacts are provided by His-377 and Asp-387. Glu-424 provides a ligand contact to substrate. The Nucleophile; for NAALADase activity role is filled by Glu-424. Glu-425 contributes to the Zn(2+) binding site. Ca(2+)-binding residues include Glu-433 and Glu-436. Zn(2+) is bound at residue Asp-453. N-linked (GlcNAc...) asparagine glycans are attached at residues Asn-459 and Asn-476. Substrate contacts are provided by residues 517–518 (SG), Asn-519, 534–536 (RAR), Tyr-552, and 552–553 (YH). Residue His-553 coordinates Zn(2+). Ser-628 serves as the catalytic Charge relay system. The N-linked (GlcNAc...) asparagine glycan is linked to Asn-638. Active-site charge relay system residues include Asp-666 and His-689. 699–700 (KY) contacts substrate.

Belongs to the peptidase M28 family. M28B subfamily. Homodimer. Zn(2+) serves as cofactor. In terms of processing, the first two amino acids at the N-terminus of isoform PSMA' appear to be cleaved by limited proteolysis. The N-terminus is blocked. In terms of tissue distribution, highly expressed in prostate epithelium. Detected in urinary bladder, kidney, testis, ovary, fallopian tube, breast, adrenal gland, liver, esophagus, stomach, small intestine, colon and brain (at protein level). Detected in the small intestine, brain, kidney, liver, spleen, colon, trachea, spinal cord and the capillary endothelium of a variety of tumors. Expressed specifically in jejunum brush border membranes. In the brain, highly expressed in the ventral striatum and brain stem. Also expressed in fetal liver and kidney. Isoform PSMA' is the most abundant form in normal prostate. Isoform PSMA-1 is the most abundant form in primary prostate tumors. Isoform PSMA-9 is specifically expressed in prostate cancer.

The protein resides in the cell membrane. The protein localises to the cytoplasm. The catalysed reaction is Release of an unsubstituted, C-terminal glutamyl residue, typically from Ac-Asp-Glu or folylpoly-gamma-glutamates.. With respect to regulation, the NAALADase activity is inhibited by beta-NAAG, quisqualic acid, 2-(phosphonomethyl) pentanedioic acid (PMPA) and EDTA. Activated by cobalt. Has both folate hydrolase and N-acetylated-alpha-linked-acidic dipeptidase (NAALADase) activity. Has a preference for tri-alpha-glutamate peptides. In the intestine, required for the uptake of folate. In the brain, modulates excitatory neurotransmission through the hydrolysis of the neuropeptide, N-aceylaspartylglutamate (NAAG), thereby releasing glutamate. Involved in prostate tumor progression. Its function is as follows. Also exhibits a dipeptidyl-peptidase IV type activity. In vitro, cleaves Gly-Pro-AMC. The chain is Glutamate carboxypeptidase 2 from Homo sapiens (Human).